We begin with the raw amino-acid sequence, 61 residues long: Pleurocidin-like peptide WF3 (61 aa).

Residues M1–C22 form the signal peptide. A propeptide spanning residues Y48–E61 is cleaved from the precursor.

The protein belongs to the pleurocidin family.

The protein localises to the secreted. Its function is as follows. Antimicrobial peptide. The polypeptide is Pleurocidin-like peptide WF3 (ple3) (Pseudopleuronectes americanus (Winter flounder)).